The following is a 189-amino-acid chain: MPRPENPIQLAVIGAAHGTRGEVRVKTFTGDPLAIAEYGLLYDEQGKSYEVLEARPAKTVVVVRFKGINDRNAAEALNGTELFIDRSQLPDDELDEDEFFQTDLIGLLAVDAEGKTYGVVSALFDFGGGDLIELSEKGKRPMLIPFTEAAVPEIDLDKGTLLVEPYAAGLIADDEDERPQNEKKKPKKS.

In terms of domain architecture, PRC barrel spans 96–169; the sequence is EDEFFQTDLI…TLLVEPYAAG (74 aa). The segment at 170–189 is disordered; it reads LIADDEDERPQNEKKKPKKS.

It belongs to the RimM family. Binds ribosomal protein uS19.

Its subcellular location is the cytoplasm. An accessory protein needed during the final step in the assembly of 30S ribosomal subunit, possibly for assembly of the head region. Essential for efficient processing of 16S rRNA. May be needed both before and after RbfA during the maturation of 16S rRNA. It has affinity for free ribosomal 30S subunits but not for 70S ribosomes. In Brucella anthropi (strain ATCC 49188 / DSM 6882 / CCUG 24695 / JCM 21032 / LMG 3331 / NBRC 15819 / NCTC 12168 / Alc 37) (Ochrobactrum anthropi), this protein is Ribosome maturation factor RimM.